The sequence spans 608 residues: Afamin (608 aa).

The first 21 residues, 1–21 (MRHLKLTGFIFFLLSLTESLA), serve as a signal peptide directing secretion. Albumin domains are found at residues 22–210 (LPTK…APIT), 211–403 (QYLK…KFNE), and 404–599 (TTER…KTGD). An N-linked (GlcNAc...) asparagine glycan is attached at N33. Disulfide bonds link C77–C86, C99–C114, C113–C124, C148–C193, C224–C270, C269–C277, C289–C303, C302–C313, C340–C385, and C384–C393. A glycan (N-linked (GlcNAc...) asparagine) is linked at N109. N153 is a glycosylation site (N-linked (GlcNAc...) asparagine). Residues 215–319 (ALSSYQRNVC…RADCIINANK (105 aa)) form a binding pocket for hydrophobic ligands region. N402 carries an N-linked (GlcNAc...) asparagine glycan. Cystine bridges form between C416-C462, C461-C470, C483-C499, C498-C509, and C580-C589. An N-linked (GlcNAc...) asparagine glycan is attached at N488. Residues 585 to 608 (KPEACFSPESSKTGDVSQDAEKQR) form a disordered region.

It belongs to the ALB/AFP/VDB family. As to quaternary structure, forms a 1:1 complex with Wnt family members; interacts with WNT1, WNT2B, WNT3, WNT3A, WNT5A, WNT7A, WNT7B, WNT8, WNT9A, WNT9B, WNT10A and WNT10B. Post-translationally, N-glycosylated; more than 90% of the glycans are sialylated.

It localises to the secreted. In terms of biological role, functions as a carrier for hydrophobic molecules in body fluids. Essential for the solubility and activity of lipidated Wnt family members, including WNT1, WNT2B, WNT3, WNT3A, WNT5A, WNT7A, WNT7B, WNT8, WNT9A, WNT9B, WNT10A and WNT10B. Binds vitamin E. May transport vitamin E in body fluids under conditions where the lipoprotein system is not sufficient. May be involved in the transport of vitamin E across the blood-brain barrier. The chain is Afamin (Afm) from Rattus norvegicus (Rat).